We begin with the raw amino-acid sequence, 536 residues long: Putative ATP-dependent RNA helicase L364 (536 aa).

Residues 47-214 (ISILLKYFLV…IPFYLMNFIP (168 aa)) form the Helicase ATP-binding domain. Position 60 to 67 (60 to 67 (SDTGVGKT)) interacts with ATP. Positions 160 to 163 (DESH) match the DEAH box motif. A coiled-coil region spans residues 288–334 (LSDDSDKIAEAYEEIAELMRELEEKKTQCKNHLAKIQKLKQEIELRK). The Helicase C-terminal domain occupies 338–486 (FIEQTQLYLE…ISAINDGDLE (149 aa)). The segment at 502–536 (VLNEPVNNPIEEPVNDPVKDPVEDLTDNQPNIVEV) is disordered.

This sequence belongs to the DEAD box helicase family. DEAH subfamily.

It catalyses the reaction ATP + H2O = ADP + phosphate + H(+). The sequence is that of Putative ATP-dependent RNA helicase L364 from Acanthamoeba polyphaga (Amoeba).